A 419-amino-acid polypeptide reads, in one-letter code: Tryptophan synthase beta chain (419 aa).

Lys86 is subject to N6-(pyridoxal phosphate)lysine. A compositionally biased stretch (basic and acidic residues) spans 394 to 403 (VEQQKVEQQK). Residues 394-419 (VEQQKVEQQKADNQNTEKNNQESGNE) form a disordered region. The span at 404–419 (ADNQNTEKNNQESGNE) shows a compositional bias: polar residues.

The protein belongs to the TrpB family. As to quaternary structure, tetramer of two alpha and two beta chains. It depends on pyridoxal 5'-phosphate as a cofactor.

The catalysed reaction is (1S,2R)-1-C-(indol-3-yl)glycerol 3-phosphate + L-serine = D-glyceraldehyde 3-phosphate + L-tryptophan + H2O. Its pathway is amino-acid biosynthesis; L-tryptophan biosynthesis; L-tryptophan from chorismate: step 5/5. The beta subunit is responsible for the synthesis of L-tryptophan from indole and L-serine. The sequence is that of Tryptophan synthase beta chain from Shewanella halifaxensis (strain HAW-EB4).